Consider the following 407-residue polypeptide: Serine/threonine transporter SstT (407 aa).

Helical transmembrane passes span 12 to 32 (GNLIVQICIGIVLGILIGISS), 42 to 62 (LGILFTSALKAIAPMLVFILI), 81 to 101 (IIILYIVGTFLASACAVLANF), 141 to 161 (ALSSGNYLGILTWAIAGGIAL), 179 to 199 (VLKIVKFIVKLAPFGIFGLVA), 218 to 238 (ILLVATMLFVTFVINALIVFF), 245 to 267 (FPLIFICLRHSAFFAFFTRSSAA), 288 to 308 (ISIPLGATINMAGAAVTIAIL), and 330 to 350 (IIATFAACGASGVAGGSLLLI).

Belongs to the dicarboxylate/amino acid:cation symporter (DAACS) (TC 2.A.23) family.

The protein resides in the cell inner membrane. It carries out the reaction L-serine(in) + Na(+)(in) = L-serine(out) + Na(+)(out). It catalyses the reaction L-threonine(in) + Na(+)(in) = L-threonine(out) + Na(+)(out). In terms of biological role, involved in the import of serine and threonine into the cell, with the concomitant import of sodium (symport system). This is Serine/threonine transporter SstT from Campylobacter jejuni subsp. jejuni serotype O:23/36 (strain 81-176).